An 805-amino-acid polypeptide reads, in one-letter code: Nitrite reductase [NAD(P)H] (805 aa).

43–79 (YNRILLSKVLQGDTDIKDITLNDWDWYEENNIQLYTN) lines the FAD pocket. 193-223 (LQNELEKQGMTFLLEKQTEEIVGDDRVEGLR) is an NADP(+) binding site. Residues cysteine 418, cysteine 420, cysteine 453, and cysteine 456 each coordinate [2Fe-2S] cluster. Residues cysteine 635, cysteine 641, cysteine 675, and cysteine 679 each coordinate [4Fe-4S] cluster. Cysteine 679 provides a ligand contact to siroheme.

Belongs to the nitrite and sulfite reductase 4Fe-4S domain family. In terms of assembly, homodimer. The cofactor is siroheme. [2Fe-2S] cluster is required as a cofactor. [4Fe-4S] cluster serves as cofactor. It depends on FAD as a cofactor.

It carries out the reaction NH4(+) + 3 NADP(+) + 2 H2O = nitrite + 3 NADPH + 5 H(+). It catalyses the reaction NH4(+) + 3 NAD(+) + 2 H2O = nitrite + 3 NADH + 5 H(+). It participates in nitrogen metabolism; nitrate reduction (assimilation). In terms of biological role, required for nitrite assimilation. The sequence is that of Nitrite reductase [NAD(P)H] (nasD) from Bacillus subtilis (strain 168).